Consider the following 234-residue polypeptide: uncharacterized protein (234 aa).

The region spanning 5–234 (MELVDVWKIY…ERRGVVYGDT (230 aa)) is the ABC transporter domain. 41 to 48 (GPSGSGKS) is a binding site for ATP.

It belongs to the ABC transporter superfamily.

This is an uncharacterized protein from Thermotoga maritima (strain ATCC 43589 / DSM 3109 / JCM 10099 / NBRC 100826 / MSB8).